The following is a 481-amino-acid chain: Uridine 5'-monophosphate synthase (481 aa).

Residues 1 to 214 (MEVASQALGP…VFSAANHNGL (214 aa)) are OPRTase. Residue tyrosine 37 is modified to Phosphotyrosine. The interval 215 to 220 (PPPEKK) is domain linker. The OMPdecase stretch occupies residues 221–481 (ACKELSFGAR…EAYLSRLAVQ (261 aa)). Serine 257 is a binding site for orotidine 5'-phosphate. UMP contacts are provided by residues serine 257, aspartate 259, and 281 to 283 (KTH). Orotidine 5'-phosphate is bound by residues lysine 281, lysine 314, aspartate 317, threonine 321, serine 372, 430 to 432 (QQY), and 450 to 451 (GR). Active-site for OMPdecase activity residues include lysine 314 and aspartate 317. Residues aspartate 317, threonine 321, serine 372, 430-432 (QQY), and 450-451 (GR) contribute to the UMP site.

This sequence in the N-terminal section; belongs to the purine/pyrimidine phosphoribosyltransferase family. In the C-terminal section; belongs to the OMP decarboxylase family. As to quaternary structure, homodimer; dimerization is required for enzymatic activity.

It carries out the reaction orotidine 5'-phosphate + diphosphate = orotate + 5-phospho-alpha-D-ribose 1-diphosphate. The enzyme catalyses orotidine 5'-phosphate + H(+) = UMP + CO2. It participates in pyrimidine metabolism; UMP biosynthesis via de novo pathway; UMP from orotate: step 1/2. Its pathway is pyrimidine metabolism; UMP biosynthesis via de novo pathway; UMP from orotate: step 2/2. Functionally, bifunctional enzyme catalyzing the last two steps of de novo pyrimidine biosynthesis, orotate phosphoribosyltransferase (OPRT), which converts orotate to orotidine-5'-monophosphate (OMP), and orotidine-5'-monophosphate decarboxylase (ODC), the terminal enzymatic reaction that decarboxylates OMP to uridine monophosphate (UMP). This Mus musculus (Mouse) protein is Uridine 5'-monophosphate synthase (Umps).